The sequence spans 712 residues: Lactoperoxidase (712 aa).

The N-terminal stretch at 1–22 (MWVCLQLPVFLASVTLFEVAAS) is a signal peptide. The propeptide occupies 23-100 (DTIAQAASTT…WEESLKRLRR (78 aa)). Residue N106 is glycosylated (N-linked (GlcNAc...) asparagine). 4 disulfide bridges follow: C123–C284, C132–C145, C246–C256, and C250–C274. N212 is a glycosylation site (N-linked (GlcNAc...) asparagine). A heme b-binding site is contributed by D225. The Proton acceptor role is filled by H226. Residue D227 participates in Ca(2+) binding. Residues T301, F303, D305, and S307 each coordinate Ca(2+). S315 carries the phosphoserine modification. N-linked (GlcNAc...) asparagine glycosylation is found at N322 and N358. C354 and C365 are disulfide-bonded. Residue E375 participates in heme b binding. N449 carries an N-linked (GlcNAc...) asparagine glycan. H468 provides a ligand contact to heme b. Y482 carries the 3'-nitrotyrosine modification. Intrachain disulfides connect C573-C630 and C671-C696.

It belongs to the peroxidase family. XPO subfamily. It depends on Ca(2+) as a cofactor. Heme b is required as a cofactor. As to expression, mammary gland; milk.

It is found in the secreted. Its subcellular location is the cytoplasm. The catalysed reaction is 2 a phenolic donor + H2O2 = 2 a phenolic radical donor + 2 H2O. The enzyme catalyses thiocyanate + H2O2 + H(+) = hypothiocyanous acid + H2O. It catalyses the reaction iodide + H2O2 = hypoiodite + H2O. Its function is as follows. Heme-containing oxidoreductase which catalyzes the conversion of thiocyanate (SCN(-)) into antimicrobial agent hypothiocyanous acid (OSCN(-)) in the presence of hydrogen peroxide (H2O2). Also involved in the conversion of iodide (I(-)) into hypoiodite (IO(-)) in the presence of H2O2. Responsible for the inactivation of a wide range of micro-organisms and hence, important component of defense mechanism. The lactoperoxidase-SCN(-)-H2O2 system shows antibacterial properties against some streptococci strains. The lactoperoxidase-I(-)-H2O2 system shows antibacterial properties against E.coli. May protect the udder from infection and may promote growth in newborns. May be implicated in airway host defense against infection. May contribute to maintaining an appropriate H2O2 cellular level, therefore protecting cells from H2O2-caused injuries and inflammation. The protein is Lactoperoxidase (LPO) of Bos taurus (Bovine).